The sequence spans 355 residues: Myricetin 7/4'-O-methyltransferase 2 (355 aa).

Asp221 contacts S-adenosyl-L-methionine. His259 acts as the Proton acceptor in catalysis.

Belongs to the class I-like SAM-binding methyltransferase superfamily. Cation-independent O-methyltransferase family. As to quaternary structure, homodimer. As to expression, mainly expressed in leaves secreting glandular trichomes types 1 and 4 and, to a lesser extent, in storage trichomes type 6.

It carries out the reaction quercetin + S-adenosyl-L-methionine = rhamnetin + S-adenosyl-L-homocysteine + H(+). It catalyses the reaction kaempferol + S-adenosyl-L-methionine = kaempferide + S-adenosyl-L-homocysteine + H(+). The catalysed reaction is myricetin + S-adenosyl-L-methionine = 7-O-methylmyricetin + S-adenosyl-L-homocysteine + H(+). The enzyme catalyses kaempferide + S-adenosyl-L-methionine = 7,4'-O-dimethylkaempferol + S-adenosyl-L-homocysteine + H(+). It carries out the reaction isorhamnetin + S-adenosyl-L-methionine = 3',4'-O-dimethylquercetin + S-adenosyl-L-homocysteine + 2 H(+). It catalyses the reaction 3',4',5,7-tetrahydroxy-3-methoxyflavone + S-adenosyl-L-methionine = 3',4',5-trihydroxy-3,7-dimethoxyflavone + S-adenosyl-L-homocysteine + H(+). The catalysed reaction is rhamnetin + S-adenosyl-L-methionine = 7,4'-O-dimethylquercetin + S-adenosyl-L-homocysteine + H(+). The enzyme catalyses syringetin + S-adenosyl-L-methionine = 7,3',5'-O-trimethylmyricetin + S-adenosyl-L-homocysteine + H(+). It carries out the reaction 3',4',5'-O-trimethylmyricetin + S-adenosyl-L-methionine = 7,3',4',5'-O-tetramethylmyricetin + S-adenosyl-L-homocysteine. The protein operates within flavonoid metabolism. Flavonoid 7/4'-O-methyltransferase involved in the biosynthesis of polymethoxylated flavonoids natural products such as myricetin derivatives, aroma compounds possessing antioxidant properties and exhibiting pharmacological activities such as anti-carcinogen, anti-viral, anti-thrombotic, anti-diabetic, anti-atherosclerotic, and anti-inflammatory effects. Catalyzes S-adenosylmethionine-dependent regioselective 7/4'-O-methylation of flavonoids; active on various hydroxylated flavonoid substrates, including myricetin, quercetin and kaempferol. Mediates the formation of 4'-methyl derivatives from kaempferol, 3'-methyl quercetin (isorhamnetin), 7-methyl quercetin (rhamnetin) and 3'-methyl myricetin, producing 4'-methyl kaempferol (kaempferide), 3',4'-dimethyl quercetin (4'-O-methyl isorhamnetin), 7,4'-dimethyl quercetin (4'-O-methyl rhamnetin, rhamnacene) and 3',4'-dimethyl myricetin, respectively. Triggers the 7-O-methylation of quercetin, myricetin, 4'-methyl kaempferol (kaempferide), 3-methyl quercetin, 3',5'-dimethyl myricetin (syringetin) and 3',4',5'-trimethyl myricetin, thus leading to production of 7-methyl quercetin (rhamnetin), 7-methyl myricetin, 7,4'-dimethyl kaempferol (7-O-methyl kaempferide), 3,7-dimethyl quercetin, 7,3',5'-trimethyl myricetin (7-O-methyl syringetin) and 7,3',4',5'-tetramethyl myricetin, respectively. The protein is Myricetin 7/4'-O-methyltransferase 2 of Solanum habrochaites (Wild tomato).